Here is an 845-residue protein sequence, read N- to C-terminus: Putative DEAD-box ATP-dependent RNA helicase 29 (845 aa).

Residues 28–56 (GGFESLNLGPNVFNAIKKKGYKVPTPIQR) carry the Q motif motif. Positions 59 to 232 (MPLILSGVDV…KAGLREPQLV (174 aa)) constitute a Helicase ATP-binding domain. 72 to 79 (ARTGSGKT) lines the ATP pocket. The short motif at 180-183 (DEAD) is the DEAD box element. The 156-residue stretch at 256–411 (KYSALLYLVR…EVLKNMEEVM (156 aa)) folds into the Helicase C-terminal domain. The segment at 675-845 (SGKIKTESGA…GGGGKRGRGR (171 aa)) is disordered. Composition is skewed to basic and acidic residues over residues 696–716 (RWQE…DETT) and 738–754 (VRSE…ERQQ). Residues 770–799 (GGRGGARGGRGGGARGGRGGSRDFGGGGRD) are compositionally biased toward gly residues. The segment covering 806–817 (RGGRSGGRDFGG) has biased composition (basic and acidic residues). A compositionally biased stretch (basic residues) spans 828–845 (GGKRGGGRGGGGKRGRGR).

The protein belongs to the DEAD box helicase family. DDX54/DBP10 subfamily.

It carries out the reaction ATP + H2O = ADP + phosphate + H(+). In Arabidopsis thaliana (Mouse-ear cress), this protein is Putative DEAD-box ATP-dependent RNA helicase 29 (RH29).